A 167-amino-acid polypeptide reads, in one-letter code: NAD(P)H-quinone oxidoreductase subunit I, chloroplastic (167 aa).

4Fe-4S ferredoxin-type domains follow at residues 55-84 (GRIH…VDWK) and 95-124 (LNYS…MTEE). [4Fe-4S] cluster-binding residues include Cys64, Cys67, Cys70, Cys74, Cys104, Cys107, Cys110, and Cys114.

The protein belongs to the complex I 23 kDa subunit family. As to quaternary structure, NDH is composed of at least 16 different subunits, 5 of which are encoded in the nucleus. Requires [4Fe-4S] cluster as cofactor.

It is found in the plastid. The protein localises to the chloroplast thylakoid membrane. It carries out the reaction a plastoquinone + NADH + (n+1) H(+)(in) = a plastoquinol + NAD(+) + n H(+)(out). The enzyme catalyses a plastoquinone + NADPH + (n+1) H(+)(in) = a plastoquinol + NADP(+) + n H(+)(out). In terms of biological role, NDH shuttles electrons from NAD(P)H:plastoquinone, via FMN and iron-sulfur (Fe-S) centers, to quinones in the photosynthetic chain and possibly in a chloroplast respiratory chain. The immediate electron acceptor for the enzyme in this species is believed to be plastoquinone. Couples the redox reaction to proton translocation, and thus conserves the redox energy in a proton gradient. This chain is NAD(P)H-quinone oxidoreductase subunit I, chloroplastic, found in Lepidium virginicum (Virginia pepperweed).